Consider the following 213-residue polypeptide: Imidazole glycerol phosphate synthase subunit HisH (213 aa).

The Glutamine amidotransferase type-1 domain maps to 4–213; that stretch reads SIAIVDYGMG…LYRNFVHWKP (210 aa). Catalysis depends on cysteine 83, which acts as the Nucleophile. Residues histidine 193 and glutamate 195 contribute to the active site.

Heterodimer of HisH and HisF.

The protein resides in the cytoplasm. The catalysed reaction is 5-[(5-phospho-1-deoxy-D-ribulos-1-ylimino)methylamino]-1-(5-phospho-beta-D-ribosyl)imidazole-4-carboxamide + L-glutamine = D-erythro-1-(imidazol-4-yl)glycerol 3-phosphate + 5-amino-1-(5-phospho-beta-D-ribosyl)imidazole-4-carboxamide + L-glutamate + H(+). It carries out the reaction L-glutamine + H2O = L-glutamate + NH4(+). The protein operates within amino-acid biosynthesis; L-histidine biosynthesis; L-histidine from 5-phospho-alpha-D-ribose 1-diphosphate: step 5/9. In terms of biological role, IGPS catalyzes the conversion of PRFAR and glutamine to IGP, AICAR and glutamate. The HisH subunit catalyzes the hydrolysis of glutamine to glutamate and ammonia as part of the synthesis of IGP and AICAR. The resulting ammonia molecule is channeled to the active site of HisF. This chain is Imidazole glycerol phosphate synthase subunit HisH, found in Burkholderia multivorans (strain ATCC 17616 / 249).